The chain runs to 824 residues: E3 ubiquitin-protein ligase TRIM71 (824 aa).

The segment at 23–93 (CPLCKELCGC…PLKLRCPTCD (71 aa)) adopts an RING-type zinc-finger fold. The tract at residues 37–56 (SSNSSTSSSSSQTSNSSSTS) is disordered. Residues 147–194 (LSDPQCSSCDEGNPATSHCLDCQEYLCDNCVRAHQRVRLTKDHFIEGL) form a B box-type 1; atypical zinc finger. C152, C155, C176, H180, C234, H237, C257, and H262 together coordinate Zn(2+). Residues 229–270 (ERMDFCQHHDDAVLRFFCDSCTVPICRECSLGRHAGHSFTYL) form a B box-type 2 zinc finger. A coiled-coil region spans residues 293–321 (QAIQLSIEKAQAIAEQVELKAKVVQSEVK). The stretch at 435–536 (SSGAFATASK…IEGSPFKVMV (102 aa)) is one Filamin repeat. NHL repeat units follow at residues 549 to 592 (MASF…FKPC), 596 to 639 (HHKF…FTFD), 643 to 686 (LLKF…FGPD), 690 to 733 (LNKY…IRPD), 737 to 780 (ARFL…FEPN), and 784 to 824 (LCKF…ILMF).

The protein belongs to the TRIM/RBCC family.

Its subcellular location is the cytoplasm. The protein localises to the P-body. It carries out the reaction S-ubiquitinyl-[E2 ubiquitin-conjugating enzyme]-L-cysteine + [acceptor protein]-L-lysine = [E2 ubiquitin-conjugating enzyme]-L-cysteine + N(6)-ubiquitinyl-[acceptor protein]-L-lysine.. It participates in protein modification; protein ubiquitination. E3 ubiquitin-protein ligase that cooperates with the microRNAs (miRNAs) machinery and promotes embryonic stem cells proliferation and maintenance. Binds to miRNAs and participates in post-transcriptional repression of transcripts. Required to maintain proliferation and prevent premature differentiation of neural progenitor cells during early neural development. This is E3 ubiquitin-protein ligase TRIM71 (trim71) from Danio rerio (Zebrafish).